We begin with the raw amino-acid sequence, 122 residues long: Large ribosomal subunit protein uL14 (122 aa).

This sequence belongs to the universal ribosomal protein uL14 family. In terms of assembly, part of the 50S ribosomal subunit. Forms a cluster with proteins L3 and L19. In the 70S ribosome, L14 and L19 interact and together make contacts with the 16S rRNA in bridges B5 and B8.

In terms of biological role, binds to 23S rRNA. Forms part of two intersubunit bridges in the 70S ribosome. This chain is Large ribosomal subunit protein uL14, found in Chlorobium limicola (strain DSM 245 / NBRC 103803 / 6330).